A 147-amino-acid chain; its full sequence is Large ribosomal subunit protein bL9 (147 aa).

This sequence belongs to the bacterial ribosomal protein bL9 family.

Binds to the 23S rRNA. The chain is Large ribosomal subunit protein bL9 from Campylobacter jejuni subsp. doylei (strain ATCC BAA-1458 / RM4099 / 269.97).